The chain runs to 151 residues: Large ribosomal subunit protein bL9 (151 aa).

It belongs to the bacterial ribosomal protein bL9 family.

Binds to the 23S rRNA. This Chlorobium phaeobacteroides (strain DSM 266 / SMG 266 / 2430) protein is Large ribosomal subunit protein bL9.